A 207-amino-acid polypeptide reads, in one-letter code: Large ribosomal subunit protein uL4 (207 aa).

The disordered stretch occupies residues 49–78; sequence HAVKNRSAVSGGGRKPWRQKGTGRARQGSI.

This sequence belongs to the universal ribosomal protein uL4 family. Part of the 50S ribosomal subunit.

In terms of biological role, one of the primary rRNA binding proteins, this protein initially binds near the 5'-end of the 23S rRNA. It is important during the early stages of 50S assembly. It makes multiple contacts with different domains of the 23S rRNA in the assembled 50S subunit and ribosome. Its function is as follows. Forms part of the polypeptide exit tunnel. This chain is Large ribosomal subunit protein uL4, found in Streptococcus pneumoniae serotype 2 (strain D39 / NCTC 7466).